A 461-amino-acid chain; its full sequence is Cyclic 2,3-diphosphoglycerate synthetase (461 aa).

Belongs to the cyclic 2,3-diphosphoglycerate synthetase family.

The protein localises to the cytoplasm. The enzyme catalyses (2R)-2,3-bisphosphoglycerate + ATP + H(+) = cyclic (2R)-2,3-bisphosphoglycerate + ADP + phosphate. Catalyzes the formation of cyclic 2,3-diphosphoglycerate (cDPG) by formation of an intramolecular phosphoanhydride bond at the expense of ATP. This Methanosphaera stadtmanae (strain ATCC 43021 / DSM 3091 / JCM 11832 / MCB-3) protein is Cyclic 2,3-diphosphoglycerate synthetase.